The sequence spans 9159 residues: Halomucin (9159 aa).

The signal sequence occupies residues 1 to 30 (MSQTAKPIFAVVVALIVLISGVAFIGSVSA). 2 C-type lectin domains span residues 644–776 (TTGN…YLVE) and 929–1060 (YDGH…VEYG). Residues 1310–1332 (QPQTVNDPDAVSTRNNNVGSNGL) show a composition bias toward polar residues. The disordered stretch occupies residues 1310 to 1351 (QPQTVNDPDAVSTRNNNVGSNGLDSKIEDDQNNGADGNPHGT). The V-G-G-L motif-rich region stretch occupies residues 1756–3380 (VGGLIGESSG…GFNGEHVGGL (1625 aa)). Disordered stretches follow at residues 3484–3514 (GATAQSDATGSGTPGGATGYGSVGDTTPAPQ), 4878–4912 (ESYWDKGATDKSDATGSDTPATVSGYGSVGDTTPA), 6570–6589 (TDSATGSSVGGLIGSQSSGQ), 7047–7097 (TPTV…GINT), 7660–7702 (ATDS…NPGG), 7888–7923 (IDGDGLADDNEATGVPTDNDDDNDGIPDDEDQEPAL), 8212–8237 (STQQKRVGPLVSEDPSTVSWPSGAAD), and 8369–8614 (DSTA…GSST). Gly residues predominate over residues 3495–3505 (GTPGGATGYGS). Residues 4880–4890 (YWDKGATDKSD) are compositionally biased toward basic and acidic residues. Polar residues-rich tracts occupy residues 7048–7057 (PTVTINSSSD) and 7068–7078 (GEDSTSSNESS). Positions 7079–7092 (DGTESDQGDPEDDI) are enriched in acidic residues. Residues 7681–7698 (VTGSTPTFVSSGTVTTPE) are compositionally biased toward polar residues. The Cadherin domain occupies 7686-7793 (PTFVSSGTVT…ITDVDEQPTG (108 aa)). Composition is skewed to acidic residues over residues 7888–7898 (IDGDGLADDNE) and 7905–7920 (DNDDDNDGIPDDEDQE). Residues 8378–8390 (ALEDDSSNQDSGD) show a composition bias toward acidic residues. Composition is skewed to low complexity over residues 8391-8529 (DSSN…SSQN) and 8538-8548 (SAAAVGAESGS). 2 stretches are compositionally biased toward gly residues: residues 8549 to 8566 (EMGGETGGESQAGGGDGS) and 8574 to 8608 (AGGGSSGGSSSGDSGGSSSGNSGGSSSGNSGGSSS).

Probably glycosylated with sugar containing sialic acid. This may further contribute to its overall negative charge, thereby creating an aqueous shield covering the cells.

The protein resides in the secreted. Its function is as follows. May protect the organism from desiccation stress. May also contribute to the rigidity and maintenance of the unique square cell morphology of H.walsbyi. This Haloquadratum walsbyi (strain DSM 16790 / HBSQ001) protein is Halomucin (hmu).